The following is a 435-amino-acid chain: Mitochondrial association factor 1 form a1 (435 aa).

A signal peptide spans 1 to 20; the sequence is MWRIWRCRLSFLFATGCLLG. Topologically, residues 21 to 96 are vacuolar; that stretch reads ALTAGLGSQM…VTARRRRNRR (76 aa). A helical transmembrane segment spans residues 97-117; sequence IALIATAVGVAVILAALYVLR. The Cytoplasmic segment spans residues 118-435; it reads RRRAQPPQEP…ERTYTFPQGD (318 aa). Residues 120–159 are disordered; that stretch reads RAQPPQEPEPPTRLRTPRPRAPSGQQQPSESEPPAGVPMT.

Interacts with host SAMM50.

The protein localises to the parasitophorous vacuole membrane. During host cell infection by tachyzoites, does not play a role in tethering the parasitophorous vacuole to the host mitochondria, probably because it does not bind host mitochondrial import protein TOMM70. The sequence is that of Mitochondrial association factor 1 form a1 from Toxoplasma gondii (strain ATCC 50611 / Me49).